Reading from the N-terminus, the 187-residue chain is Basic helix-loop-helix transcription factor scleraxis (187 aa).

2 disordered regions span residues 21-83 (LSED…TNSV) and 140-163 (AFFH…QPKQ). Residues 34-43 (SDEKPFHLDA) show a composition bias toward basic and acidic residues. A compositionally biased stretch (basic residues) spans 50 to 72 (AGKRRSGKKAGRLHREPRQRHTA). The region spanning 67 to 119 (RQRHTANARERDRTNSVNTAFTALRTLIPTEPADRKLSKIETLRLASSYISHL) is the bHLH domain.

As to quaternary structure, efficient DNA binding requires dimerization with another bHLH protein. Dimerizes and binds the E-box consensus sequence with E12. Expressed in the intersomitic, the superficial proximomedial limb mesenchyme and the subectodermal mesenchyme.

The protein resides in the nucleus. Plays an early essential role in mesoderm formation, as well as a later role in formation of somite-derived chondrogenic lineages. The polypeptide is Basic helix-loop-helix transcription factor scleraxis (SCX) (Gallus gallus (Chicken)).